Reading from the N-terminus, the 210-residue chain is Nucleoside triphosphate pyrophosphatase (210 aa).

Aspartate 80 (proton acceptor) is an active-site residue.

It belongs to the Maf family. Requires a divalent metal cation as cofactor.

It is found in the cytoplasm. The enzyme catalyses a ribonucleoside 5'-triphosphate + H2O = a ribonucleoside 5'-phosphate + diphosphate + H(+). The catalysed reaction is a 2'-deoxyribonucleoside 5'-triphosphate + H2O = a 2'-deoxyribonucleoside 5'-phosphate + diphosphate + H(+). Nucleoside triphosphate pyrophosphatase. May have a dual role in cell division arrest and in preventing the incorporation of modified nucleotides into cellular nucleic acids. The polypeptide is Nucleoside triphosphate pyrophosphatase (Mycobacterium sp. (strain JLS)).